A 120-amino-acid chain; its full sequence is Large ribosomal subunit protein uL18 (120 aa).

In terms of assembly, part of the 50S ribosomal subunit; part of the 5S rRNA/L5/L18/L25 subcomplex. Contacts the 5S and 23S rRNAs.

In terms of biological role, this is one of the proteins that bind and probably mediate the attachment of the 5S RNA into the large ribosomal subunit, where it forms part of the central protuberance. This Rhodopseudomonas palustris (strain ATCC BAA-98 / CGA009) protein is Large ribosomal subunit protein uL18.